The following is a 355-amino-acid chain: UDP-N-acetylglucosamine--N-acetylmuramyl-(pentapeptide) pyrophosphoryl-undecaprenol N-acetylglucosamine transferase (355 aa).

UDP-N-acetyl-alpha-D-glucosamine contacts are provided by residues 14 to 16 (TGG), asparagine 123, arginine 164, serine 190, and glutamine 284.

Belongs to the glycosyltransferase 28 family. MurG subfamily.

It localises to the cell inner membrane. It carries out the reaction di-trans,octa-cis-undecaprenyl diphospho-N-acetyl-alpha-D-muramoyl-L-alanyl-D-glutamyl-meso-2,6-diaminopimeloyl-D-alanyl-D-alanine + UDP-N-acetyl-alpha-D-glucosamine = di-trans,octa-cis-undecaprenyl diphospho-[N-acetyl-alpha-D-glucosaminyl-(1-&gt;4)]-N-acetyl-alpha-D-muramoyl-L-alanyl-D-glutamyl-meso-2,6-diaminopimeloyl-D-alanyl-D-alanine + UDP + H(+). It functions in the pathway cell wall biogenesis; peptidoglycan biosynthesis. Its function is as follows. Cell wall formation. Catalyzes the transfer of a GlcNAc subunit on undecaprenyl-pyrophosphoryl-MurNAc-pentapeptide (lipid intermediate I) to form undecaprenyl-pyrophosphoryl-MurNAc-(pentapeptide)GlcNAc (lipid intermediate II). The polypeptide is UDP-N-acetylglucosamine--N-acetylmuramyl-(pentapeptide) pyrophosphoryl-undecaprenol N-acetylglucosamine transferase (Synechocystis sp. (strain ATCC 27184 / PCC 6803 / Kazusa)).